Reading from the N-terminus, the 246-residue chain is Bis(5'-nucleosyl)-tetraphosphatase PrpE [asymmetrical] (246 aa).

Belongs to the PrpE family. Ni(2+) is required as a cofactor.

The enzyme catalyses P(1),P(4)-bis(5'-guanosyl) tetraphosphate + H2O = GMP + GTP + 2 H(+). Asymmetrically hydrolyzes Ap4p to yield AMP and ATP. This is Bis(5'-nucleosyl)-tetraphosphatase PrpE [asymmetrical] from Bacillus cereus (strain ZK / E33L).